The following is a 49-amino-acid chain: uncharacterized protein (49 aa).

The helical transmembrane segment at 20-42 (LFLVGLTIGKMATSRILSFLGFI) threads the bilayer.

It localises to the membrane. This is an uncharacterized protein from Dictyostelium discoideum (Social amoeba).